Here is a 190-residue protein sequence, read N- to C-terminus: Sec-independent protein translocase protein TatB (190 aa).

A helical transmembrane segment spans residues 2–22 (LPDIGGTELLVIAAVALIVVG). The disordered stretch occupies residues 130–190 (IVSKPARKPP…KASTNSDITS (61 aa)). Basic residues predominate over residues 134–144 (PARKPPAKKAA). Low complexity predominate over residues 145–163 (AKPAAKAELVSKPKASAKA).

It belongs to the TatB family. As to quaternary structure, the Tat system comprises two distinct complexes: a TatABC complex, containing multiple copies of TatA, TatB and TatC subunits, and a separate TatA complex, containing only TatA subunits. Substrates initially bind to the TatABC complex, which probably triggers association of the separate TatA complex to form the active translocon.

Its subcellular location is the cell inner membrane. Part of the twin-arginine translocation (Tat) system that transports large folded proteins containing a characteristic twin-arginine motif in their signal peptide across membranes. Together with TatC, TatB is part of a receptor directly interacting with Tat signal peptides. TatB may form an oligomeric binding site that transiently accommodates folded Tat precursor proteins before their translocation. The polypeptide is Sec-independent protein translocase protein TatB (Caulobacter sp. (strain K31)).